We begin with the raw amino-acid sequence, 236 residues long: 7-cyano-7-deazaguanine synthase (236 aa).

7–17 lines the ATP pocket; it reads CSGGLDSVSLA. Residues Cys185, Cys193, Cys196, and Cys199 each coordinate Zn(2+).

Belongs to the QueC family. Zn(2+) serves as cofactor.

The catalysed reaction is 7-carboxy-7-deazaguanine + NH4(+) + ATP = 7-cyano-7-deazaguanine + ADP + phosphate + H2O + H(+). Its pathway is purine metabolism; 7-cyano-7-deazaguanine biosynthesis. In terms of biological role, catalyzes the ATP-dependent conversion of 7-carboxy-7-deazaguanine (CDG) to 7-cyano-7-deazaguanine (preQ(0)). The sequence is that of 7-cyano-7-deazaguanine synthase from Rhizobium leguminosarum bv. trifolii (strain WSM2304).